A 108-amino-acid polypeptide reads, in one-letter code: FK506-binding protein 1 (108 aa).

The PPIase FKBP-type domain occupies 20-108; it reads GDAVTIHYVG…VFDVELLGIN (89 aa).

It belongs to the FKBP-type PPIase family. FKBP1 subfamily.

It localises to the cytoplasm. The catalysed reaction is [protein]-peptidylproline (omega=180) = [protein]-peptidylproline (omega=0). Its activity is regulated as follows. Inhibited by both FK506 and rapamycin. Functionally, PPIases accelerate the folding of proteins. It catalyzes the cis-trans isomerization of proline imidic peptide bonds in oligopeptides. This chain is FK506-binding protein 1 (FPR1), found in Yarrowia lipolytica (strain CLIB 122 / E 150) (Yeast).